We begin with the raw amino-acid sequence, 357 residues long: Decapping nuclease RAI1 (357 aa).

Residue Glu-157 participates in a divalent metal cation binding. Substrate contacts are provided by Cys-189 and Glu-206. 3 residues coordinate a divalent metal cation: Asp-208, Glu-226, and Leu-227. 2 residues coordinate substrate: Lys-228 and Gln-252.

This sequence belongs to the DXO/Dom3Z family. Interacts with rat1; the interaction is direct, stabilizes rat1 protein structure and stimulates its exoribonuclease activity. The interaction also stimulates rai1 pyrophosphohydrolase activity, probably by recruiting it to mRNA substrates. A divalent metal cation is required as a cofactor.

The protein resides in the nucleus. The catalysed reaction is a 5'-end NAD(+)-phospho-ribonucleoside in mRNA + H2O = a 5'-end phospho-ribonucleoside in mRNA + NAD(+) + H(+). It catalyses the reaction a 5'-end (N(7)-methyl 5'-triphosphoguanosine)-ribonucleoside-ribonucleotide in mRNA + H2O = a (N(7)-methyl 5'-triphosphoguanosine)-nucleoside + a 5'-end phospho-ribonucleoside in mRNA + H(+). The enzyme catalyses a 5'-end triphospho-ribonucleoside in mRNA + H2O = a 5'-end phospho-ribonucleoside in mRNA + diphosphate + H(+). Functionally, decapping enzyme for NAD-capped RNAs: specifically hydrolyzes the nicotinamide adenine dinucleotide (NAD) cap from a subset of RNAs by removing the entire NAD moiety from the 5'-end of an NAD-capped RNA. The NAD-cap is present at the 5'-end of some RNAs and snoRNAs. In contrast to the canonical 5'-end N7 methylguanosine (m7G) cap, the NAD cap promotes mRNA decay. Also acts as a non-canonical decapping enzyme that removes the entire cap structure of m7G capped or incompletely capped RNAs. Has decapping activity toward incomplete 5'-end m7G cap mRNAs such as unmethylated 5'-end-capped RNA (cap0), while it has no activity toward 2'-O-ribose methylated m7G cap (cap1). Also possesses RNA 5'-pyrophosphohydrolase activity by hydrolyzing the 5'-end triphosphate to release pyrophosphates. Stimulates exoribonuclease activity of Rat1, allowing it to degrade RNAs with stable secondary structure more effectively. This is Decapping nuclease RAI1 (rai1) from Emericella nidulans (strain FGSC A4 / ATCC 38163 / CBS 112.46 / NRRL 194 / M139) (Aspergillus nidulans).